The sequence spans 559 residues: Prolyl 4-hydroxylase subunit alpha-1 (559 aa).

Positions 1-16 (MRLALLVLATIGYAVA) are cleaved as a signal peptide. Asparagine 158 carries an N-linked (GlcNAc...) asparagine glycan. A Fe2OG dioxygenase domain is found at 404–512 (TAEELQIANY…KWVSNKWIHE (109 aa)). Fe cation contacts are provided by histidine 422, aspartate 424, and histidine 493. Residue lysine 503 participates in 2-oxoglutarate binding.

Belongs to the P4HA family. Heterotetramer of two alpha chains and two beta chains. Exists either as a phy-1(2)/pdi-2(2) tetramer or as a phy-1/phy-2/pdi-2(2) tetramer. Fe(2+) serves as cofactor. L-ascorbate is required as a cofactor.

It localises to the endoplasmic reticulum lumen. It catalyses the reaction L-prolyl-[collagen] + 2-oxoglutarate + O2 = trans-4-hydroxy-L-prolyl-[collagen] + succinate + CO2. Catalyzes the post-translational formation of 4-hydroxyproline in -Xaa-Pro-Gly- sequences in collagens and other proteins. The protein is Prolyl 4-hydroxylase subunit alpha-1 (dpy-18) of Caenorhabditis elegans.